The chain runs to 256 residues: Triosephosphate isomerase (256 aa).

10 to 12 (NWK) is a binding site for substrate. The Electrophile role is filled by H99. E171 acts as the Proton acceptor in catalysis. Substrate is bound by residues G177, S216, and 237-238 (GG).

This sequence belongs to the triosephosphate isomerase family. Homodimer.

The protein localises to the cytoplasm. The enzyme catalyses D-glyceraldehyde 3-phosphate = dihydroxyacetone phosphate. Its pathway is carbohydrate biosynthesis; gluconeogenesis. It functions in the pathway carbohydrate degradation; glycolysis; D-glyceraldehyde 3-phosphate from glycerone phosphate: step 1/1. Involved in the gluconeogenesis. Catalyzes stereospecifically the conversion of dihydroxyacetone phosphate (DHAP) to D-glyceraldehyde-3-phosphate (G3P). The sequence is that of Triosephosphate isomerase from Colwellia psychrerythraea (strain 34H / ATCC BAA-681) (Vibrio psychroerythus).